The chain runs to 313 residues: Acetyl-coenzyme A carboxylase carboxyl transferase subunit alpha (313 aa).

Positions Asp-30–Phe-291 constitute a CoA carboxyltransferase C-terminal domain.

The protein belongs to the AccA family. As to quaternary structure, acetyl-CoA carboxylase is a heterohexamer composed of biotin carboxyl carrier protein (AccB), biotin carboxylase (AccC) and two subunits each of ACCase subunit alpha (AccA) and ACCase subunit beta (AccD).

The protein localises to the cytoplasm. It carries out the reaction N(6)-carboxybiotinyl-L-lysyl-[protein] + acetyl-CoA = N(6)-biotinyl-L-lysyl-[protein] + malonyl-CoA. It functions in the pathway lipid metabolism; malonyl-CoA biosynthesis; malonyl-CoA from acetyl-CoA: step 1/1. Its function is as follows. Component of the acetyl coenzyme A carboxylase (ACC) complex. First, biotin carboxylase catalyzes the carboxylation of biotin on its carrier protein (BCCP) and then the CO(2) group is transferred by the carboxyltransferase to acetyl-CoA to form malonyl-CoA. This Zymomonas mobilis subsp. mobilis (strain ATCC 31821 / ZM4 / CP4) protein is Acetyl-coenzyme A carboxylase carboxyl transferase subunit alpha.